The chain runs to 168 residues: Disulfide bond formation protein B 2 (168 aa).

Residues 1–9 (MSLACLRSF) are Cytoplasmic-facing. A helical transmembrane segment spans residues 10 to 26 (FLPALLASTAVLVASFH). The Periplasmic segment spans residues 27-44 (LESVVGLVPCALCFSQRL). Cysteine 36 and cysteine 39 are joined by a disulfide. Residues 45 to 61 (MLGVYALVCLAALVHSP) form a helical membrane-spanning segment. Residues 62 to 67 (AARGRR) lie on the Cytoplasmic side of the membrane. A helical transmembrane segment spans residues 68–85 (AYAGLALASAFGGALLAG). Residues 86-140 (RHVWLQGDPQVVDGCHLPVEQVLQRPLGEILQMFLLGSPDCVSISWSFLDLTLPE) lie on the Periplasmic side of the membrane. Cysteines 100 and 126 form a disulfide. The helical transmembrane segment at 141 to 159 (WSLLAFLLLAAMPLSWLVA) threads the bilayer. Over 160–168 (YRFRKRAMA) the chain is Cytoplasmic.

It belongs to the DsbB family.

It is found in the cell inner membrane. Its function is as follows. Required for disulfide bond formation in some periplasmic proteins. Acts by oxidizing the DsbA protein. The sequence is that of Disulfide bond formation protein B 2 from Pseudomonas entomophila (strain L48).